Consider the following 719-residue polypeptide: Pesticidal crystal protein Cry1Ib (719 aa).

The protein belongs to the delta endotoxin family.

Its function is as follows. Promotes colloidosmotic lysis by binding to the midgut epithelial cells of certain coleopteran and lepidopteran species. Active on Plutella xylostella but not on Bombyx mori. The protein is Pesticidal crystal protein Cry1Ib (cry1Ib) of Bacillus thuringiensis subsp. entomocidus.